We begin with the raw amino-acid sequence, 353 residues long: Phosphate acyltransferase (353 aa).

It belongs to the PlsX family. In terms of assembly, homodimer. Probably interacts with PlsY.

The protein resides in the cytoplasm. The catalysed reaction is a fatty acyl-[ACP] + phosphate = an acyl phosphate + holo-[ACP]. It participates in lipid metabolism; phospholipid metabolism. In terms of biological role, catalyzes the reversible formation of acyl-phosphate (acyl-PO(4)) from acyl-[acyl-carrier-protein] (acyl-ACP). This enzyme utilizes acyl-ACP as fatty acyl donor, but not acyl-CoA. This Ralstonia pickettii (strain 12J) protein is Phosphate acyltransferase.